The primary structure comprises 167 residues: Ureidoglycolate lyase (167 aa).

It belongs to the ureidoglycolate lyase family. As to quaternary structure, homodimer. The cofactor is Ni(2+).

It carries out the reaction (S)-ureidoglycolate = urea + glyoxylate. It functions in the pathway nitrogen metabolism; (S)-allantoin degradation. Functionally, catalyzes the catabolism of the allantoin degradation intermediate (S)-ureidoglycolate, generating urea and glyoxylate. Involved in the utilization of allantoin as nitrogen source. The polypeptide is Ureidoglycolate lyase (Pseudomonas putida (strain W619)).